The sequence spans 658 residues: Cysteine-rich receptor-like protein kinase 14 (658 aa).

The N-terminal stretch at 1 to 22 is a signal peptide; that stretch reads MELKNLFPIFWFVLVGFAVVSA. Gnk2-homologous domains are found at residues 23 to 125 and 131 to 240; these read QECG…NSSF and AEPH…LFPF. At 23–277 the chain is on the extracellular side; the sequence is QECGKTGFFV…ATKKGSITIS (255 aa). N-linked (GlcNAc...) asparagine glycans are attached at residues Asn51, Asn60, Asn102, Asn122, and Asn146. Residues 278–298 traverse the membrane as a helical segment; it reads IGIVWAIIIPTVIVVFLVLLA. The Cytoplasmic portion of the chain corresponds to 299–658; it reads LGFVVYRRRK…DVTITDFEPR (360 aa). In terms of domain architecture, Protein kinase spans 337–614; sequence FSESNIIGRG…NMMLINNSYV (278 aa). ATP-binding positions include 343-351 and Lys364; that span reads IGRGGFGEV. Position 409 is a phosphotyrosine (Tyr409). Asp461 (proton acceptor) is an active-site residue. Position 465 is a phosphoserine (Ser465). Thr501 is subject to Phosphothreonine. Tyr509 bears the Phosphotyrosine mark.

It belongs to the protein kinase superfamily. Ser/Thr protein kinase family. CRK subfamily.

It is found in the membrane. It carries out the reaction L-seryl-[protein] + ATP = O-phospho-L-seryl-[protein] + ADP + H(+). The enzyme catalyses L-threonyl-[protein] + ATP = O-phospho-L-threonyl-[protein] + ADP + H(+). The polypeptide is Cysteine-rich receptor-like protein kinase 14 (CRK14) (Arabidopsis thaliana (Mouse-ear cress)).